A 352-amino-acid chain; its full sequence is Inhibin beta C chain (352 aa).

Positions 1-18 (MASSLLLALLFLTPTTVV) are cleaved as a signal peptide. A propeptide spanning residues 19–236 (NPKTEGPCPA…VEGKHRVRRR (218 aa)) is cleaved from the precursor. N-linked (GlcNAc...) asparagine glycans are attached at residues Asn-111, Asn-143, Asn-161, and Asn-173. Intrachain disulfides connect Cys-240/Cys-248, Cys-247/Cys-317, Cys-276/Cys-349, and Cys-280/Cys-351.

It belongs to the TGF-beta family. In terms of assembly, homodimeric or heterodimeric through association with alpha and beta subunits, linked by one or more disulfide bonds. Inhibins are heterodimers of one alpha and one beta subunit. Activins are homo- or heterodimers of beta subunits only. Mainly expressed in the adult liver.

It is found in the secreted. Its function is as follows. Inhibins and activins inhibit and activate, respectively, the secretion of follitropin by the pituitary gland. Inhibins/activins are involved in regulating a number of diverse functions such as hypothalamic and pituitary hormone secretion, gonadal hormone secretion, germ cell development and maturation, erythroid differentiation, insulin secretion, nerve cell survival, embryonic axial development or bone growth, depending on their subunit composition. Inhibins appear to oppose the functions of activins. This chain is Inhibin beta C chain (Inhbc), found in Mus musculus (Mouse).